Consider the following 110-residue polypeptide: UPF0060 membrane protein MT2717 (110 aa).

The next 4 membrane-spanning stretches (helical) occupy residues 6 to 26 (ILLFVLAAVAEIGGAWLVWQG), 32 to 52 (GWLWAGLGVIALGVYGFFATL), 61 to 81 (VLAAYGGVFVAGSLAWGMALD), and 90 to 110 (VIGALGCMAGVAVIMYAPRGH).

Belongs to the UPF0060 family.

The protein resides in the cell membrane. This is UPF0060 membrane protein MT2717 from Mycobacterium tuberculosis (strain CDC 1551 / Oshkosh).